A 162-amino-acid polypeptide reads, in one-letter code: Peptidyl-prolyl cis-trans isomerase (162 aa).

Residues 5–161 form the PPIase cyclophilin-type domain; the sequence is FFDVIANGQP…ARIVIDKCGT (157 aa).

The protein belongs to the cyclophilin-type PPIase family. PPIase A subfamily.

Its subcellular location is the cytoplasm. The catalysed reaction is [protein]-peptidylproline (omega=180) = [protein]-peptidylproline (omega=0). With respect to regulation, binds cyclosporin A (CsA). CsA mediates some of its effects via an inhibitory action on PPIase. PPIases accelerate the folding of proteins. It catalyzes the cis-trans isomerization of proline imidic peptide bonds in oligopeptides. In Schizosaccharomyces pombe (strain 972 / ATCC 24843) (Fission yeast), this protein is Peptidyl-prolyl cis-trans isomerase (ppi1).